Here is a 762-residue protein sequence, read N- to C-terminus: Endothelin-converting enzyme 1 (762 aa).

The Cytoplasmic portion of the chain corresponds to 1-60 (MGSLRPPQGLGLQWSSFFLGKKGPGLTVSLPLLASSLQVNFRSPRSGQRCWAARTSVEKR). The chain crosses the membrane as a helical; Signal-anchor for type II membrane protein span at residues 61 to 81 (LVVLVTLLAAGLVACLAALGI). The Extracellular portion of the chain corresponds to 82–762 (QYRTRTPPVC…MNPRHKCEVW (681 aa)). Positions 90 to 762 (VCLTEACVSV…MNPRHKCEVW (673 aa)) constitute a Peptidase M13 domain. 5 cysteine pairs are disulfide-bonded: C91–C96, C114–C747, C122–C707, C177–C427, and C636–C759. Residues N158, N179, N202, N262, N308, N354, N375, and N531 are each glycosylated (N-linked (GlcNAc...) asparagine). A Zn(2+)-binding site is contributed by H599. The active site involves E600. H603 contributes to the Zn(2+) binding site. Residues N624 and N643 are each glycosylated (N-linked (GlcNAc...) asparagine). E659 provides a ligand contact to Zn(2+). D663 acts as the Proton donor in catalysis.

The protein belongs to the peptidase M13 family. Homodimer; disulfide-linked. Interacts with PPP1R16B. Interacts with TSPAN8; this interaction recruits the endothelin converting enzyme ECE1 to tetraspanin-enriched microdomains and positively modulates its enzymatic activity. Zn(2+) is required as a cofactor. As to expression, all isoforms are expressed in aortic endothelial cells. Isoform A is also expressed in liver; isoform B in smooth muscle cells and fibroblasts; isoform C in aortic endothelial cells, smooth muscle cells, fibroblasts, liver and lung, and isoform D in smooth muscle cells.

Its subcellular location is the cell membrane. It catalyses the reaction Hydrolysis of the 21-Trp-|-Val-22 bond in big endothelin to form endothelin 1.. Its activity is regulated as follows. Inhibited by phosphoramidon. Converts big endothelin-1 to endothelin-1. The polypeptide is Endothelin-converting enzyme 1 (Ece1) (Rattus norvegicus (Rat)).